Reading from the N-terminus, the 199-residue chain is Superoxide dismutase [Fe] (199 aa).

Residues His-27, His-79, Asp-161, and His-165 each coordinate Fe cation.

The protein belongs to the iron/manganese superoxide dismutase family. In terms of assembly, homodimer. Fe cation serves as cofactor.

It catalyses the reaction 2 superoxide + 2 H(+) = H2O2 + O2. In terms of biological role, destroys superoxide anion radicals which are normally produced within the cells and which are toxic to biological systems. The chain is Superoxide dismutase [Fe] (sodB) from Synechocystis sp. (strain ATCC 27184 / PCC 6803 / Kazusa).